Here is a 134-residue protein sequence, read N- to C-terminus: Small ribosomal subunit protein bS16 (134 aa).

Residues 105–134 (EAERRQKRLTAKTRRRQAKKAAEAAGSAEG) are disordered. Basic residues predominate over residues 109-123 (RQKRLTAKTRRRQAK).

Belongs to the bacterial ribosomal protein bS16 family.

This chain is Small ribosomal subunit protein bS16, found in Chlorobaculum parvum (strain DSM 263 / NCIMB 8327) (Chlorobium vibrioforme subsp. thiosulfatophilum).